Consider the following 288-residue polypeptide: Heme oxygenase 1 (288 aa).

The Cytoplasmic segment spans residues 1-265 (MERPQPDSMP…KTPLNTHSQA (265 aa)). K18, H25, Y134, and R183 together coordinate heme b. Positions 223–260 (HDTKDQSPSRAPGLRQRASNKAQDSAPVETPRGKTPLN) are disordered. The residue at position 229 (S229) is a Phosphoserine. The helical; Anchor for type IV membrane protein transmembrane segment at 266-288 (PLLRWVLTLSFLVATVAVGLYAM) threads the bilayer.

It belongs to the heme oxygenase family. Homodimer and higher order homooligomer. Oligomerization is crucial for its stability and function in the endoplasmic reticulum. Interacts with FLVCR2; this interaction is potentiated in the presence of heme. A soluble form arises by proteolytic removal of the membrane anchor.

It is found in the endoplasmic reticulum membrane. The catalysed reaction is heme b + 3 reduced [NADPH--hemoprotein reductase] + 3 O2 = biliverdin IXalpha + CO + Fe(2+) + 3 oxidized [NADPH--hemoprotein reductase] + 3 H2O + H(+). Catalyzes the oxidative cleavage of heme at the alpha-methene bridge carbon, released as carbon monoxide (CO), to generate biliverdin IXalpha, while releasing the central heme iron chelate as ferrous iron. Affords protection against programmed cell death and this cytoprotective effect relies on its ability to catabolize free heme and prevent it from sensitizing cells to undergo apoptosis. In terms of biological role, catalyzes the oxidative cleavage of heme at the alpha-methene bridge carbon, released as carbon monoxide (CO), to generate biliverdin IXalpha, while releasing the central heme iron chelate as ferrous iron. The protein is Heme oxygenase 1 (HMOX1) of Pongo abelii (Sumatran orangutan).